The following is a 276-amino-acid chain: Large ribosomal subunit protein uL2 (276 aa).

The segment at 219-276 is disordered; it reads TVRGSVMNPNDHPHGGGEGRAPIGRKSPMSPWGKPTLGYKTRQRNKPSDKYIVRKRKK.

It belongs to the universal ribosomal protein uL2 family. As to quaternary structure, part of the 50S ribosomal subunit. Forms a bridge to the 30S subunit in the 70S ribosome.

One of the primary rRNA binding proteins. Required for association of the 30S and 50S subunits to form the 70S ribosome, for tRNA binding and peptide bond formation. It has been suggested to have peptidyltransferase activity; this is somewhat controversial. Makes several contacts with the 16S rRNA in the 70S ribosome. The polypeptide is Large ribosomal subunit protein uL2 (Oceanobacillus iheyensis (strain DSM 14371 / CIP 107618 / JCM 11309 / KCTC 3954 / HTE831)).